We begin with the raw amino-acid sequence, 442 residues long: Radical S-adenosyl methionine domain-containing protein 1, mitochondrial (442 aa).

Residues Met-1–Arg-22 constitute a mitochondrion transit peptide. Residues Met-1–Ser-37 form a disordered region. The region spanning Ala-34–Arg-270 is the Radical SAM core domain. An S-adenosyl-L-methionine-binding site is contributed by Tyr-43. Residues Cys-49, Cys-53, and Cys-56 each coordinate [4Fe-4S] cluster. S-adenosyl-L-methionine contacts are provided by residues Gly-98, Gly-99–Thr-100, Glu-131, Gln-158, Arg-170, and Asp-195.

The protein belongs to the anaerobic coproporphyrinogen-III oxidase family. HemW subfamily. [4Fe-4S] cluster is required as a cofactor.

The protein resides in the mitochondrion. Its function is as follows. May be a heme chaperone, appears to bind heme. Homologous bacterial proteins do not have oxygen-independent coproporphyrinogen-III oxidase activity. Binds 1 [4Fe-4S] cluster. The cluster is coordinated with 3 cysteines and an exchangeable S-adenosyl-L-methionine. This chain is Radical S-adenosyl methionine domain-containing protein 1, mitochondrial (RSAD1), found in Bos taurus (Bovine).